The primary structure comprises 37 residues: Mu-cyrtautoxin-As1a (37 aa).

Intrachain disulfides connect Cys-1-Cys-15, Cys-8-Cys-19, Cys-14-Cys-35, and Cys-26-Cys-31.

The protein belongs to the neurotoxin 13 (insecticidal toxin ABC) family. 01 (Aps III) subfamily. As to expression, expressed by the venom gland.

The protein localises to the secreted. The recombinant mu-cyrtautoxin-As1a potently and voltage-independently blocks voltage-gated sodium channels (Nav) of insects. It acts by pluging the outer vestibule of the channel. It acts in combination with a weak (30%) voltage-independent block of insect voltage-gated calcium (Cav) channels (low-voltage and high-voltage channels). Tested on DUM neurons, it inhibits sodium currents with an IC(50) of 540 nM (and a Hill coefficient &gt;1, reflecting an incomplete block at higher concentrations). In vivo, it induces flaccid paralysis in adult Australian sheep blowfly Lucilia cuprina. It is both paralytic and lethal, when injected into lepidopteran larvae. It is a slower acting toxin, being lethal at 24 hours, but not paralytic at 1 hour post-injection. The polypeptide is Mu-cyrtautoxin-As1a (Apomastus schlingeri (Trap-door spider)).